The primary structure comprises 503 residues: LEM domain-containing protein 2 (503 aa).

N-acetylalanine is present on Ala-2. Residues Ala-2–Ala-42 form the LEM domain. Residues Ala-42–Leu-74 show a composition bias toward basic and acidic residues. 2 disordered regions span residues Ala-42–Ala-97 and Ala-127–Leu-157. The required for nuclear retention and interaction with LMNA isoform C stretch occupies residues Leu-74–Arg-130. Over residues Arg-75 to Pro-87 the composition is skewed to low complexity. A phosphoserine mark is found at Ser-166 and Ser-175. The segment at Leu-172 to Ala-198 is disordered. Positions Gly-184 to Arg-197 are enriched in low complexity. 2 helical membrane passes run Leu-213–Met-233 and Val-377–Leu-397. The tract at residues Ile-395–Arg-503 is winged-Helix (WH). Phosphoserine is present on residues Ser-497, Ser-499, and Ser-501.

As to quaternary structure, interacts (via N-terminus) with LMNA isoform C (via C-terminus) (in vitro). Interacts (via LEM domain) with BANF1. Interacts (via C-terminus) with CHMP7. Interacts (via N-terminus) with tubulin; the interaction causes microtubule bundling and stabilization (in vitro). Phosphorylated; strongly phosphorylated in mitosis compared to G1/S. In terms of tissue distribution, ubiquitously expressed, including bone marrow, brain, kidney, colon, skeletal muscle, thymus, testis and uterus.

It is found in the nucleus inner membrane. Its subcellular location is the nucleus envelope. The protein localises to the cytoplasm. The protein resides in the cytoskeleton. It localises to the spindle. In terms of biological role, nuclear lamina-associated inner nuclear membrane protein that is involved in nuclear structure organization, maintenance of nuclear envelope (NE) integrity and NE reformation after mitosis. Plays a role as transmembrane adapter for the endosomal sorting complexes required for transport (ESCRT), and is thereby involved in ESCRT-mediated NE reformation. Promotes ESCRT-mediated NE closure by recruiting CHMP7 and downstream ESCRT-III proteins IST1/CHMP8 and CHMP2A to the reforming NE during anaphase. During nuclear reassembly, condenses into a liquid-like coating around microtubule spindles and coassembles with CHMP7 to form a macromolecular O-ring seal at the confluence between membranes, chromatin, and the spindle to facilitate early nuclear sealing. Plays a role in the organization of heterochromatin associated with the NE and in the maintenance of NE organization under mechanical stress. Required for embryonic development and involved in regulation of several signaling pathways such as MAPK and AKT. Required for myoblast differentiation involving regulation of ERK signaling. Essential for cardiac homeostasis and proper heart function. The polypeptide is LEM domain-containing protein 2 (LEMD2) (Homo sapiens (Human)).